Here is a 208-residue protein sequence, read N- to C-terminus: Coiled-coil domain-containing protein 25 (208 aa).

Over 1–105 the chain is Extracellular; it reads MVFYFTSSSV…SNLKKTADMD (105 aa). Residues 21–25 form a DNA-binding region; sequence KDKYE. Position 23 is an N6-acetyllysine (Lys-23). A helical transmembrane segment spans residues 106–122; sequence VGQIGFHRQKDVKIVTV. A coiled-coil region spans residues 117-187; that stretch reads VKIVTVEKKV…REMDELRSYS (71 aa). The Cytoplasmic segment spans residues 123-208; the sequence is EKKVNEILNR…QDGNDSDEFM (86 aa). Positions 145-184 are enriched in basic and acidic residues; the sequence is EAEKECRDHEERNEKKAQIQEMKRREKEEMKKKREMDELR. The segment at 145-208 is disordered; sequence EAEKECRDHE…QDGNDSDEFM (64 aa). Residue Ser-204 is modified to Phosphoserine.

Belongs to the CCDC25 family. Interacts (via cytoplasmic region) with ILK.

It localises to the cell membrane. The protein resides in the endomembrane system. Its function is as follows. Transmembrane receptor that senses neutrophil extracellular traps (NETs) and triggers the ILK-PARVB pathway to enhance cell motility. NETs are mainly composed of DNA fibers and are released by neutrophils to bind pathogens during inflammation. Formation of NETs is also associated with cancer metastasis, NET-DNA acting as a chemotactic factor to attract cancer cells. Specifically binds NETs on its extracellular region, in particular the 8-OHdG-enriched DNA present in NETs, and recruits ILK, initiating the ILK-PARVB cascade to induce cytoskeleton rearrangement and directional migration of cells. This Bos taurus (Bovine) protein is Coiled-coil domain-containing protein 25.